We begin with the raw amino-acid sequence, 240 residues long: MRSVPRRERHRRLRNAKDCACRYHSPTPQIFDRLELLNQQLNYALPVGIISQAIITTDNYLGYSLSHYLFSGKRTAAFRSLDDISLWIEKGSLRQLIVDMEALPVSCIEALNQLRALSWQQSDIQIYLLVSDKTSAITQFIRMAGRFFVLSRRQNLASVREALLSASKPRLSESFSRTDWLMIETLAQGASLKEIARQQSVPYHRVVYRLKQLITLLNLPHRQSFLRLIQQLNVTFHDIF.

Its subcellular location is the fimbrium. The polypeptide is Fimbriae Y protein (fimY) (Salmonella typhimurium (strain LT2 / SGSC1412 / ATCC 700720)).